The chain runs to 327 residues: ATPase ASNA1 homolog (327 aa).

26-33 (KGGVGKTT) serves as a coordination point for ATP. Asp-57 is an active-site residue. The ATP site is built by Glu-238 and Asn-265. The Zn(2+) site is built by Cys-274 and Cys-277.

The protein belongs to the arsA ATPase family. Homodimer.

The protein localises to the cytoplasm. It localises to the endoplasmic reticulum. Functionally, ATPase required for the post-translational delivery of tail-anchored (TA) proteins to the endoplasmic reticulum. Recognizes and selectively binds the transmembrane domain of TA proteins in the cytosol. This complex then targets to the endoplasmic reticulum by membrane-bound receptors, where the tail-anchored protein is released for insertion. This process is regulated by ATP binding and hydrolysis. ATP binding drives the homodimer towards the closed dimer state, facilitating recognition of newly synthesized TA membrane proteins. ATP hydrolysis is required for insertion. Subsequently, the homodimer reverts towards the open dimer state, lowering its affinity for the membrane-bound receptor, and returning it to the cytosol to initiate a new round of targeting. The chain is ATPase ASNA1 homolog from Entamoeba dispar (strain ATCC PRA-260 / SAW760).